The chain runs to 302 residues: Tegument protein VP22 (302 aa).

A compositionally biased stretch (basic and acidic residues) spans 1–10 (MASSDGDRLC). Disordered regions lie at residues 1–42 (MASS…PDDS) and 125–167 (SFTK…TATS). The interval 154-244 (RPISFSTAPK…ANEADLGEGA (91 aa)) is interaction with gE. Positions 157–167 (SFSTAPKTATS) are enriched in polar residues. The Nuclear export signal motif lies at 212–224 (LDRLLTGAVIRIT). The interval 243–302 (GASVSKRGHNRKTGDLQGGMGNEPMYAQVRKPKSRTDTQTTGRITNRSRARSASRTDARK) is disordered.

This sequence belongs to the alphaherpesvirinae VP22 tegument protein family. As to quaternary structure, interacts with gE (via C-terminus); this interaction is necessary for the recruitment of VP22/ORF9 to the Golgi and its packaging into virions. Interacts with gM (via C-terminus). Interacts with VP16/ORF10; this interaction allows the formation of a tripartite complex composed of VP16/ORF10, VP22/ORF9 and VHS/ORF17. Interacts with the capsid-binding protein ORF44. Interacts with host CGAS. Post-translationally, highly phosphorylated in the host cell. Packaging is selective for underphosphorylated forms.

The protein resides in the virion tegument. It localises to the host cytoplasm. It is found in the host nucleus. Its subcellular location is the host Golgi apparatus. Functionally, tegument protein that plays different roles during the time course of infection. Participates in both the accumulation of viral mRNAs and viral protein translation at late time of infection. Modulates the RNase activity of the virion host shutoff protein ORF17 probably to ensure necessary levels of key cellular mRNAs and proteins. Plays a role in microtubule reorganization that occurs after viral infection by stabilizing microtubule network. Plays a role in the inhibition of host innate immune system by targeting the CGAS enzymatic activity which is the principal cytosolic DNA sensor that detects invading viral DNA. Acts by mediating disruption of liquid-like droplets in which CGAS is activated, thereby preventing CGAS activity. The chain is Tegument protein VP22 from Varicella-zoster virus (strain Oka vaccine) (HHV-3).